Reading from the N-terminus, the 200-residue chain is Ubiquitin-conjugating enzyme E2 K (200 aa).

An N-acetylalanine modification is found at Ala2. The 151-residue stretch at Ile4–Gly154 folds into the UBC core domain. Lys14 bears the N6-acetyllysine; alternate mark. Lys14 is covalently cross-linked (Glycyl lysine isopeptide (Lys-Gly) (interchain with G-Cter in SUMO); alternate). A Glycyl lysine isopeptide (Lys-Gly) (interchain with G-Cter in SUMO1); alternate cross-link involves residue Lys14. The active-site Glycyl thioester intermediate is the Cys92. Ser159 carries the post-translational modification Phosphoserine. One can recognise a UBA domain in the interval Pro160–Asn200.

The protein belongs to the ubiquitin-conjugating enzyme family. As to quaternary structure, interacts with RNF138/NARF. Interacts with BRCA1. In terms of processing, sumoylation at Lys-14 impairs catalytic activity.

Its subcellular location is the cytoplasm. The catalysed reaction is S-ubiquitinyl-[E1 ubiquitin-activating enzyme]-L-cysteine + [E2 ubiquitin-conjugating enzyme]-L-cysteine = [E1 ubiquitin-activating enzyme]-L-cysteine + S-ubiquitinyl-[E2 ubiquitin-conjugating enzyme]-L-cysteine.. Its pathway is protein modification; protein ubiquitination. Its function is as follows. Accepts ubiquitin from the E1 complex and catalyzes its covalent attachment to other proteins. In vitro, in the presence or in the absence of BRCA1-BARD1 E3 ubiquitin-protein ligase complex, catalyzes the synthesis of 'Lys-48'-linked polyubiquitin chains. Does not transfer ubiquitin directly to but elongates monoubiquitinated substrate protein. Mediates the selective degradation of short-lived and abnormal proteins, such as the endoplasmic reticulum-associated degradation (ERAD) of misfolded lumenal proteins. Ubiquitinates huntingtin. May mediate foam cell formation by the suppression of apoptosis of lipid-bearing macrophages through ubiquitination and subsequence degradation of p53/TP53. Proposed to be involved in ubiquitination and proteolytic processing of NF-kappa-B; in vitro supports ubiquitination of NFKB1. This is Ubiquitin-conjugating enzyme E2 K (UBE2K) from Bos taurus (Bovine).